The chain runs to 602 residues: Glutamine--fructose-6-phosphate aminotransferase [isomerizing] (602 aa).

Cys2 (nucleophile; for GATase activity) is an active-site residue. Positions Cys2 to Gly222 constitute a Glutamine amidotransferase type-2 domain. SIS domains lie at Val284–His422 and Leu452–Pro592. Catalysis depends on Lys597, which acts as the For Fru-6P isomerization activity.

Homodimer.

It is found in the cytoplasm. It carries out the reaction D-fructose 6-phosphate + L-glutamine = D-glucosamine 6-phosphate + L-glutamate. In terms of biological role, catalyzes the first step in hexosamine metabolism, converting fructose-6P into glucosamine-6P using glutamine as a nitrogen source. This Pyrobaculum aerophilum (strain ATCC 51768 / DSM 7523 / JCM 9630 / CIP 104966 / NBRC 100827 / IM2) protein is Glutamine--fructose-6-phosphate aminotransferase [isomerizing].